The chain runs to 281 residues: MKQKIIKVGNIDVANDRPFVLFGGMNVLESRDMAMRVVETYVEATTALNIPYVFKASFDKANRSSIHSYRGPGLEEGLRIFEEIKNTFNVPIITDVHEPSQAAPVAEVVDVIQLPAFLSRQTDLVKAMAETNAVINVKKAQFLAPHEMKHIITKFNEAGNDNIILCERGSCFGYNNLVVDMLGFSTMKETGYPVIFDVTHSLQKPGARSDSADGRRSQVVQLGLAGMSQGIAGLFLESHPDPANAKCDGPCALPLHQLKAFLSQMKQMDELAKSFDIIDTE.

Belongs to the KdsA family.

Its subcellular location is the cytoplasm. It carries out the reaction D-arabinose 5-phosphate + phosphoenolpyruvate + H2O = 3-deoxy-alpha-D-manno-2-octulosonate-8-phosphate + phosphate. It functions in the pathway carbohydrate biosynthesis; 3-deoxy-D-manno-octulosonate biosynthesis; 3-deoxy-D-manno-octulosonate from D-ribulose 5-phosphate: step 2/3. It participates in bacterial outer membrane biogenesis; lipopolysaccharide biosynthesis. The polypeptide is 2-dehydro-3-deoxyphosphooctonate aldolase (Psychromonas ingrahamii (strain DSM 17664 / CCUG 51855 / 37)).